The primary structure comprises 477 residues: SH3 domain-binding protein 5 homolog (477 aa).

Positions 12 to 95 form a coiled coil; the sequence is QIQIELENLN…AAVKFQRANE (84 aa). Phosphoserine is present on residues Ser-113 and Ser-115. Positions 122 to 221 form a coiled coil; that stretch reads NAWQEMLNHA…YSTALRNLER (100 aa). 2 disordered regions span residues 224–258 and 276–306; these read EDIHRQRGDFPTPPGPREPGVGAELNSPTSSALPS and GSQMSLGAKTPQAAAETEDEEDACDYDETGA. Residues 291–305 show a composition bias toward acidic residues; it reads ETEDEEDACDYDETG.

The protein belongs to the SH3BP5 family.

This Drosophila melanogaster (Fruit fly) protein is SH3 domain-binding protein 5 homolog (pcs).